The sequence spans 918 residues: DNA mismatch repair protein MutS (918 aa).

An ATP-binding site is contributed by 662–669 (GPNMAGKS).

The protein belongs to the DNA mismatch repair MutS family.

Its function is as follows. This protein is involved in the repair of mismatches in DNA. It is possible that it carries out the mismatch recognition step. This protein has a weak ATPase activity. The sequence is that of DNA mismatch repair protein MutS from Sorangium cellulosum (strain So ce56) (Polyangium cellulosum (strain So ce56)).